Here is a 382-residue protein sequence, read N- to C-terminus: Galactokinase (382 aa).

A substrate-binding site is contributed by 34 to 37 (EHTD). 124–130 (GAGLSSS) is an ATP binding site. Mg(2+) is bound by residues serine 130 and glutamate 162. Aspartate 174 functions as the Proton acceptor in the catalytic mechanism. Residue tyrosine 223 coordinates substrate.

Belongs to the GHMP kinase family. GalK subfamily.

The protein resides in the cytoplasm. The enzyme catalyses alpha-D-galactose + ATP = alpha-D-galactose 1-phosphate + ADP + H(+). It participates in carbohydrate metabolism; galactose metabolism. In terms of biological role, catalyzes the transfer of the gamma-phosphate of ATP to D-galactose to form alpha-D-galactose-1-phosphate (Gal-1-P). The protein is Galactokinase of Aeromonas hydrophila subsp. hydrophila (strain ATCC 7966 / DSM 30187 / BCRC 13018 / CCUG 14551 / JCM 1027 / KCTC 2358 / NCIMB 9240 / NCTC 8049).